An 89-amino-acid chain; its full sequence is Small ribosomal subunit protein uS15 (89 aa).

Belongs to the universal ribosomal protein uS15 family. Part of the 30S ribosomal subunit. Forms a bridge to the 50S subunit in the 70S ribosome, contacting the 23S rRNA.

Functionally, one of the primary rRNA binding proteins, it binds directly to 16S rRNA where it helps nucleate assembly of the platform of the 30S subunit by binding and bridging several RNA helices of the 16S rRNA. Its function is as follows. Forms an intersubunit bridge (bridge B4) with the 23S rRNA of the 50S subunit in the ribosome. The chain is Small ribosomal subunit protein uS15 from Bifidobacterium animalis subsp. lactis (strain AD011).